Consider the following 190-residue polypeptide: dCTP deaminase (190 aa).

Residues 113-118 (KSTYAR), 137-139 (TLE), Gln-158, Tyr-172, and Gln-182 each bind dCTP. Catalysis depends on Glu-139, which acts as the Proton donor/acceptor.

It belongs to the dCTP deaminase family. As to quaternary structure, homotrimer.

It carries out the reaction dCTP + H2O + H(+) = dUTP + NH4(+). Its pathway is pyrimidine metabolism; dUMP biosynthesis; dUMP from dCTP (dUTP route): step 1/2. Catalyzes the deamination of dCTP to dUTP. This is dCTP deaminase from Chromobacterium violaceum (strain ATCC 12472 / DSM 30191 / JCM 1249 / CCUG 213 / NBRC 12614 / NCIMB 9131 / NCTC 9757 / MK).